We begin with the raw amino-acid sequence, 405 residues long: Dematin (405 aa).

Disordered regions lie at residues 1-29 (MERL…SPSS), 81-100 (SREC…PEVW), and 108-332 (IISQ…DRGN). Residues 11–29 (SPGSVSSSRDSSVPGSPSS) are compositionally biased toward low complexity. A phosphoserine mark is found at S16, S18, S26, S92, S96, S110, and S113. The span at 113–124 (STPRTTGTPRTS) shows a compositional bias: low complexity. Position 114 is a phosphothreonine (T114). S156 and S226 each carry phosphoserine. Acidic residues predominate over residues 216-228 (EEEEEEEDDDSEE). The tract at residues 224–308 (DDSEEEIKAI…SRLQSTEFSP (85 aa)) is interaction with RASGRF2. Basic and acidic residues-rich tracts occupy residues 229–242 (EIKA…EELS) and 252–261 (ILKEEMEKSL). Phosphoserine is present on residues S269, S279, S289, S303, S315, S333, S372, and S383. A compositionally biased stretch (low complexity) spans 277–292 (HTSLHSGTSKSSSLPS). Positions 294–322 (GRTTLSRLQSTEFSPSGSEAGSPGLQNGE) are enriched in polar residues. The HP domain maps to 337–405 (VLEQKIYPYE…NELKKKASLF (69 aa)). S403 carries the phosphoserine; by PKA modification.

Belongs to the villin/gelsolin family. In terms of assembly, monomeric (isoform 2); under reducing conditions. Self-associates. Exists under oxidizing condition as a trimer of two isoforms 2 and isoform 1 linked by disulfide bonds. Found in a complex with DMTN, F-actin and spectrin. Found in a complex with ADD2, DMTN and SLC2A1. Interacts with F-actin, ITPKB and spectrin. Isoform 2 interacts with SLC2A1 (via C-terminus cytoplasmic region). Interacts with RASGRF2. Phosphorylated. Phosphorylation at Ser-403 by PKA causes the C-terminal headpiece domain to associate with the N-terminal core domain, and leads to the inhibition of its actin bundling activity. As to expression, expressed in platelets. Isoform 1 and isoform 2 are expressed in mature erythrocytes (at protein level).

It is found in the cytoplasm. The protein resides in the cytosol. Its subcellular location is the perinuclear region. It localises to the cytoskeleton. The protein localises to the cell membrane. It is found in the membrane. The protein resides in the endomembrane system. Its subcellular location is the cell projection. Functionally, membrane-cytoskeleton-associated protein with F-actin-binding activity that induces F-actin bundles formation and stabilization. Its F-actin-bundling activity is reversibly regulated upon its phosphorylation by the cAMP-dependent protein kinase A (PKA). Binds to the erythrocyte membrane glucose transporter-1 SLC2A1/GLUT1, and hence stabilizes and attaches the spectrin-actin network to the erythrocytic plasma membrane. Plays a role in maintaining the functional integrity of PKA-activated erythrocyte shape and the membrane mechanical properties. Also plays a role as a modulator of actin dynamics in fibroblasts; acts as a negative regulator of the RhoA activation pathway. In platelets, functions as a regulator of internal calcium mobilization across the dense tubular system that affects platelet granule secretion pathways and aggregation. Also required for the formation of a diverse set of cell protrusions, such as filopodia and lamellipodia, necessary for platelet cell spreading, motility and migration. Acts as a tumor suppressor and inhibits malignant cell transformation. The sequence is that of Dematin (Dmtn) from Mus musculus (Mouse).